Reading from the N-terminus, the 100-residue chain is Class II hydrophobin CU (100 aa).

A signal peptide spans 1–25 (MQFSIATIALFLSSAMAAPYSGNSN). Disulfide bonds link C32-C82, C42-C72, C43-C55, and C83-C94.

This sequence belongs to the cerato-ulmin hydrophobin family. In terms of assembly, homotetramer. Further self-assembles to form highly ordered films at water-air interfaces through intermolecular interactions.

Its subcellular location is the secreted. The protein resides in the cell wall. In terms of biological role, aerial growth, conidiation, and dispersal of filamentous fungi in the environment rely upon a capability of their secreting small amphipathic proteins called hydrophobins (HPBs) with low sequence identity. Class I can self-assemble into an outermost layer of rodlet bundles on aerial cell surfaces, conferring cellular hydrophobicity that supports fungal growth, development and dispersal; whereas Class II form highly ordered films at water-air interfaces through intermolecular interactions but contribute nothing to the rodlet structure. CU is a class II hydrophobin that is implicated in the pathogenicity of this fungus on elm trees. Required for hydrophobicity and adherence of the cells and acts as a parasitic fitness factor by protecting infectious propagules from desiccation. Reduces the interfacial tension of both oil-water and air-water interfaces. The chain is Class II hydrophobin CU from Ophiostoma ulmi (Dutch elm disease fungus).